We begin with the raw amino-acid sequence, 191 residues long: CASP-like protein 4C2 (191 aa).

Over 1 to 29 (MEAADSATNNSKDTHFYGKSRAENRRRSD) the chain is Cytoplasmic. The chain crosses the membrane as a helical span at residues 30-50 (AMLLLFRALTFSFSLAAVVVM). Topologically, residues 51 to 72 (GTNRYRINPQLKVSWYDFEPYR) are extracellular. The helical transmembrane segment at 73-93 (YVLAVNAIICIYSFVETWLAV) threads the bilayer. The Cytoplasmic portion of the chain corresponds to 94–116 (YTYLQGSYLLPEIFQVWFDYGHD). The helical transmembrane segment at 117-137 (QGFAYLLFSANSAGVAMAQLL) threads the bilayer. The Extracellular segment spans residues 138–161 (QSGNTLIHGAYHCTEAGGYCTQAR). A helical membrane pass occupies residues 162-182 (VSIALGFVAFLFLALSSLLTG). Topologically, residues 183 to 191 (LRVARWYLR) are cytoplasmic.

This sequence belongs to the Casparian strip membrane proteins (CASP) family. Homodimer and heterodimers.

The protein resides in the cell membrane. This is CASP-like protein 4C2 from Physcomitrium patens (Spreading-leaved earth moss).